The primary structure comprises 367 residues: DNA replication and repair protein RecF (367 aa).

30–37 is a binding site for ATP; that stretch reads GANGSGKT.

Belongs to the RecF family.

The protein resides in the cytoplasm. Its function is as follows. The RecF protein is involved in DNA metabolism; it is required for DNA replication and normal SOS inducibility. RecF binds preferentially to single-stranded, linear DNA. It also seems to bind ATP. In Pseudomonas fluorescens (strain SBW25), this protein is DNA replication and repair protein RecF.